Here is an 882-residue protein sequence, read N- to C-terminus: Translation initiation factor IF-2 (882 aa).

Polar residues-rich tracts occupy residues 38-56 (NDSN…AEYS), 97-124 (GGYS…YSQN), and 140-192 (GGYS…NRDS). Disordered regions lie at residues 38–192 (NDSN…NRDS) and 236–274 (STPA…AETE). The segment covering 243–259 (ENSKELNRKLGEKKKQQ) has biased composition (basic and acidic residues). The tr-type G domain occupies 380–553 (EKPPVITIMG…DMMLLKANPS (174 aa)). The segment at 389–396 (GHVDHGKT) is G1. 389–396 (GHVDHGKT) provides a ligand contact to GTP. Positions 414–418 (GITQH) are G2. Residues 435–438 (DTPG) form a G3 region. Residues 435 to 439 (DTPGH) and 489 to 492 (NKID) each bind GTP. The G4 stretch occupies residues 489–492 (NKID). Residues 525–527 (SAL) form a G5 region.

It belongs to the TRAFAC class translation factor GTPase superfamily. Classic translation factor GTPase family. IF-2 subfamily.

Its subcellular location is the cytoplasm. Functionally, one of the essential components for the initiation of protein synthesis. Protects formylmethionyl-tRNA from spontaneous hydrolysis and promotes its binding to the 30S ribosomal subunits. Also involved in the hydrolysis of GTP during the formation of the 70S ribosomal complex. This is Translation initiation factor IF-2 (infB) from Borreliella burgdorferi (strain ATCC 35210 / DSM 4680 / CIP 102532 / B31) (Borrelia burgdorferi).